The chain runs to 265 residues: Tryptophan synthase alpha chain (265 aa).

Residues Glu-48 and Asp-59 each act as proton acceptor in the active site.

This sequence belongs to the TrpA family. Tetramer of two alpha and two beta chains.

The enzyme catalyses (1S,2R)-1-C-(indol-3-yl)glycerol 3-phosphate + L-serine = D-glyceraldehyde 3-phosphate + L-tryptophan + H2O. The protein operates within amino-acid biosynthesis; L-tryptophan biosynthesis; L-tryptophan from chorismate: step 5/5. Functionally, the alpha subunit is responsible for the aldol cleavage of indoleglycerol phosphate to indole and glyceraldehyde 3-phosphate. The polypeptide is Tryptophan synthase alpha chain (Vesicomyosocius okutanii subsp. Calyptogena okutanii (strain HA)).